A 282-amino-acid chain; its full sequence is uncharacterized protein (282 aa).

This is an uncharacterized protein from Escherichia coli (strain K12).